A 247-amino-acid chain; its full sequence is C-type lectin domain family 7 member A (247 aa).

Residues 1-44 (MEYHPDLENLDEDGYTQLHFDSQSNTRIAVVSEKGSCAASPPWR) are Cytoplasmic-facing. Residues 15-18 (YTQL) carry the ITAM-like motif. The helical; Signal-anchor for type II membrane protein transmembrane segment at 45-65 (LIAVILGILCLVILVIAVVLG) threads the bilayer. The Extracellular portion of the chain corresponds to 66-247 (TMAIWRSNSG…YSICEKKFSM (182 aa)). An N-linked (GlcNAc...) asparagine glycan is attached at Asn91. 3 cysteine pairs are disulfide-bonded: Cys120–Cys131, Cys148–Cys241, and Cys220–Cys233. In terms of domain architecture, C-type lectin spans 127 to 242 (YEKSCYLFSM…CSVPSYSICE (116 aa)). 146–153 (RQCWQLGS) lines the (1,3-beta-D-glucosyl)n pocket. Residues Lys157, Asp159, and Glu163 each contribute to the a divalent metal cation site. Residue Glu195 coordinates (1,3-beta-D-glucosyl)n. Glu242 lines the a divalent metal cation pocket.

As to quaternary structure, homodimer. Interacts with SYK; participates in leukocyte activation in presence of fungal pathogens. Interacts with CD37; this interaction controls CLEC7A-mediated IL-6 production. In terms of assembly, interacts with RANBP9. Phosphorylated on tyrosine residues in response to beta-glucan binding. As to expression, highly expressed in peripheral blood leukocytes and dendritic cells. Detected in spleen, bone marrow, lung, muscle, stomach and placenta.

It is found in the cell membrane. Its subcellular location is the cytoplasm. Its function is as follows. Lectin that functions as a pattern recognizing receptor (PRR) specific for beta-1,3-linked and beta-1,6-linked glucans, which constitute cell wall constituents from pathogenic bacteria and fungi. Necessary for the TLR2-mediated inflammatory response and activation of NF-kappa-B: upon beta-glucan binding, recruits SYK via its ITAM motif and promotes a signaling cascade that activates some CARD domain-BCL10-MALT1 (CBM) signalosomes, leading to the activation of NF-kappa-B and MAP kinase p38 (MAPK11, MAPK12, MAPK13 and/or MAPK14) pathways which stimulate expression of genes encoding pro-inflammatory cytokines and chemokines. Enhances cytokine production in macrophages and dendritic cells. Mediates production of reactive oxygen species in the cell. Mediates phagocytosis of C.albicans conidia. Binds T-cells in a way that does not involve their surface glycans and plays a role in T-cell activation. Stimulates T-cell proliferation. Induces phosphorylation of SCIMP after binding beta-glucans. The protein is C-type lectin domain family 7 member A of Homo sapiens (Human).